A 645-amino-acid chain; its full sequence is Mediator of RNA polymerase II transcription subunit 17 (645 aa).

A disordered region spans residues 215–234 (KAEDEESGSPPASPSGSGAA). The span at 222–234 (GSPPASPSGSGAA) shows a compositional bias: low complexity.

This sequence belongs to the Mediator complex subunit 17 family. Component of the Mediator complex.

The protein resides in the nucleus. In terms of biological role, component of the Mediator complex, a coactivator involved in the regulated transcription of nearly all RNA polymerase II-dependent genes. Mediator functions as a bridge to convey information from gene-specific regulatory proteins to the basal RNA polymerase II transcription machinery. Mediator is recruited to promoters by direct interactions with regulatory proteins and serves as a scaffold for the assembly of a functional preinitiation complex with RNA polymerase II and the general transcription factors. The polypeptide is Mediator of RNA polymerase II transcription subunit 17 (MED17) (Anopheles gambiae (African malaria mosquito)).